The chain runs to 312 residues: Elongation factor Ts (312 aa).

An involved in Mg(2+) ion dislocation from EF-Tu region spans residues Thr80–Val83.

It belongs to the EF-Ts family.

It is found in the cytoplasm. Its function is as follows. Associates with the EF-Tu.GDP complex and induces the exchange of GDP to GTP. It remains bound to the aminoacyl-tRNA.EF-Tu.GTP complex up to the GTP hydrolysis stage on the ribosome. The sequence is that of Elongation factor Ts from Paramagnetospirillum magneticum (strain ATCC 700264 / AMB-1) (Magnetospirillum magneticum).